A 551-amino-acid polypeptide reads, in one-letter code: Cytochrome P450 monooxygenase sdnQ (551 aa).

Positions 1–23 (MDDPSIASGFQQGTGRTTGANGT) are disordered. Polar residues predominate over residues 8 to 23 (SGFQQGTGRTTGANGT). Asparagine 21 is a glycosylation site (N-linked (GlcNAc...) asparagine). A helical membrane pass occupies residues 41 to 57 (CIGTSLLVALLTTIIIY). Cysteine 491 contributes to the heme binding site.

Belongs to the cytochrome P450 family. Heme serves as cofactor.

Its subcellular location is the membrane. It functions in the pathway antibiotic biosynthesis. In terms of biological role, cytochrome P450 monooxygenase; part of the gene cluster that mediates the biosynthesis of sordarin and hypoxysordarin, glycoside antibiotics with a unique tetracyclic diterpene aglycone structure. First, the geranylgeranyl diphosphate synthase sdnC constructs GGDP from farnesyl diphosphate and isopentenyl diphosphate. The diterpene cyclase sdnA then catalyzes the cyclization of GGDP to afford cycloaraneosene. Cycloaraneosene is then hydroxylated four times by the putative cytochrome P450 monooxygenases sdnB, sdnE, sdnF and sdnH to give a hydroxylated cycloaraneosene derivative such as cycloaraneosene-8,9,13,19-tetraol. Although the order of the hydroxylations is unclear, at least C8, C9 and C13 of the cycloaraneosene skeleton are hydroxylated before the sordaricin formation. Dehydration of the 13-hydroxy group of the hydroxylated cycloaraneosene derivative might be catalyzed by an unassigned hypothetical protein such as sdnG and sdnP to construct the cyclopentadiene moiety. The FAD-dependent oxidoreductase sdnN is proposed to catalyze the oxidation at C9 of the hydroxylated cycloaraneosene derivative and also catalyze the Baeyer-Villiger oxidation to give the lactone intermediate. The presumed lactone intermediate would be hydrolyzed to give an acrolein moiety and a carboxylate moiety. Then, [4+2]cycloaddition would occur between the acrolein moiety and the cyclopentadiene moiety to give sordaricin. SdnN might also be involved in the [4+2]cycloaddition after the hypothesized oxidation to accommodate the oxidized product and prompt the [4+2]cycloaddition. GDP-6-deoxy-D-altrose may be biosynthesized from GDP-D-mannose by the putative GDP-mannose-4,6-dehydratase sdnI and the short-chain dehydrogenase sdnK. The glycosyltransferase sdnJ catalyzes the attachment of 6-deoxy-D-altrose onto the 19-hydroxy group of sordaricin to give 4'-O-demethylsordarin. The methyltransferase sdnD would complete the biosynthesis of sordarin. Sordarin can be further modified into hypoxysordarin. The unique acyl chain at the 3'-hydroxy group of hypoxysordarin would be constructed by an iterative type I PKS sdnO and the trans-acting polyketide methyltransferase sdnL. SdnL would be responsible for the introduction of an alpha-methyl group of the polyketide chain. Alternatively, the beta-lactamase-like protein sdnR might be responsible for the cleavage and transfer of the polyketide chain from the PKS sdnO to sordarin. Two putative cytochrome P450 monooxygenases, sdnQ and sdnT, might catalyze the epoxidations of the polyketide chain to complete the biosynthesis of hypoxysordarin. Transcriptional regulators sdnM and sdnS are presumably encoded for the transcriptional regulation of the expression of the sdn gene cluster. This chain is Cytochrome P450 monooxygenase sdnQ, found in Sordaria araneosa (Pleurage araneosa).